The primary structure comprises 471 residues: 5-hydroxytryptamine receptor 2A (471 aa).

The Extracellular portion of the chain corresponds to Met1–Leu80. N-linked (GlcNAc...) asparagine glycosylation is found at Asn8, Asn38, Asn44, Asn51, and Asn54. The chain crosses the membrane as a helical span at residues Thr81–Met97. Over Ala98 to Tyr111 the chain is Cytoplasmic. The chain crosses the membrane as a helical span at residues Phe112–Tyr137. At Gly138–Lys146 the chain is on the extracellular side. A helical transmembrane segment spans residues Leu147–Leu171. The cysteines at positions 148 and 227 are disulfide-linked. Asp155 lines the serotonin pocket. A DRY motif; important for ligand-induced conformation changes motif is present at residues Asp172–Tyr174. Over Asp172–Lys191 the chain is Cytoplasmic. The helical transmembrane segment at Ala192–Leu215 threads the bilayer. The Extracellular portion of the chain corresponds to Gln216–Asp232. Residues Asn233–Ile258 traverse the membrane as a helical segment. The Cytoplasmic segment spans residues Lys259–Cys322. Position 280 is a phosphoserine (Ser280). The helical transmembrane segment at Lys323–Ile348 threads the bilayer. Asn343 serves as a coordination point for serotonin. Cysteines 349 and 353 form a disulfide. The Extracellular segment spans residues Cys349–Asp356. A helical transmembrane segment spans residues Val357–Leu382. The NPxxY motif; important for ligand-induced conformation changes and signaling motif lies at Asn376–Tyr380. The Cytoplasmic portion of the chain corresponds to Phe383–Val471. A compositionally biased stretch (basic and acidic residues) spans Gln451–Asn465. The disordered stretch occupies residues Gln451–Val471. The PDZ-binding signature appears at Ser469–Val471.

This sequence belongs to the G-protein coupled receptor 1 family. Interacts (via C-terminus) with MPDZ and PATJ. May interact (via C-terminus) with MPP3, PRDX6, DLG4, DLG1, CASK, APBA1 and MAGI2. Interacts with GRM2 and DRD2; this may affect signaling. As to expression, detected in brain cortex (at protein level). Detected in blood platelets.

Its subcellular location is the cell membrane. It localises to the cell projection. It is found in the dendrite. The protein resides in the axon. The protein localises to the cytoplasmic vesicle. Its subcellular location is the membrane. It localises to the caveola. It is found in the presynapse. G-protein coupled receptor activity is regulated by lipids: oleamide increases HTR2A-mediated activity. Inhibited by IHCH-7179 small molecule: IHCH-7179 acts both as an agonist activator for HTR1A and as an antagonist inhibitor for HTR2A. Functionally, G-protein coupled receptor for 5-hydroxytryptamine (serotonin). Also functions as a receptor for various drugs and psychoactive substances, including mescaline, psilocybin, 1-(2,5-dimethoxy-4-iodophenyl)-2-aminopropane (DOI) and lysergic acid diethylamide (LSD). Ligand binding causes a conformation change that triggers signaling via guanine nucleotide-binding proteins (G proteins) and modulates the activity of downstream effectors. HTR2A is coupled to G(q)/G(11) G alpha proteins and activates phospholipase C-beta, releasing diacylglycerol (DAG) and inositol 1,4,5-trisphosphate (IP3) second messengers that modulate the activity of phosphatidylinositol 3-kinase and promote the release of Ca(2+) ions from intracellular stores, respectively. Beta-arrestin family members inhibit signaling via G proteins and mediate activation of alternative signaling pathways. Affects neural activity, perception, cognition and mood. Plays a role in the regulation of behavior, including responses to anxiogenic situations and psychoactive substances. Plays a role in intestinal smooth muscle contraction, and may play a role in arterial vasoconstriction. (Microbial infection) Acts as a receptor for human JC polyomavirus/JCPyV. The sequence is that of 5-hydroxytryptamine receptor 2A from Homo sapiens (Human).